The primary structure comprises 314 residues: uncharacterized protein (314 aa).

Positions 68 to 91 (EKKKKSSSFEKRDKRRVQLKEKSP) are enriched in basic and acidic residues. Disordered regions lie at residues 68-97 (EKKK…TPRN) and 141-164 (MDVQ…RPAS). Residues 144-157 (QSPSTMSTSKNNVR) show a composition bias toward polar residues.

Its subcellular location is the mitochondrion. This is an uncharacterized protein from Schizosaccharomyces pombe (strain 972 / ATCC 24843) (Fission yeast).